The sequence spans 248 residues: Anamorsin homolog (248 aa).

Positions 4–129 are N-terminal SAM-like domain; the sequence is FKGLQKSLYI…ETGSSARLSF (126 aa). The linker stretch occupies residues 130–161; the sequence is AKKNANAANVWKISGDDEELIDEEELLDEEDK. [2Fe-2S] cluster contacts are provided by C172, C181, C184, and C186. Positions 172 to 186 are fe-S binding site A; the sequence is CSTTGKRKACKNCSC. [4Fe-4S] cluster-binding residues include C209, C212, C220, and C223. 2 consecutive short sequence motifs (cx2C motif) follow at residues 209-212 and 220-223; these read CGNC and CSTC. The segment at 209–223 is fe-S binding site B; that stretch reads CGNCYLGDAFRCSTC.

This sequence belongs to the anamorsin family. Monomer. [2Fe-2S] cluster serves as cofactor. The cofactor is [4Fe-4S] cluster.

The protein localises to the cytoplasm. It localises to the mitochondrion intermembrane space. Functionally, component of the cytosolic iron-sulfur (Fe-S) protein assembly (CIA) machinery. Required for the maturation of extramitochondrial Fe-S proteins. Part of an electron transfer chain functioning in an early step of cytosolic Fe-S biogenesis, facilitating the de novo assembly of a [4Fe-4S] cluster on the cytosolic Fe-S scaffold complex. Electrons are transferred from NADPH via a FAD- and FMN-containing diflavin oxidoreductase. Together with the diflavin oxidoreductase, also required for the assembly of the diferric tyrosyl radical cofactor of ribonucleotide reductase (RNR), probably by providing electrons for reduction during radical cofactor maturation in the catalytic small subunit. In Drosophila sechellia (Fruit fly), this protein is Anamorsin homolog.